Reading from the N-terminus, the 309-residue chain is Ribonuclease Z (309 aa).

Zn(2+) contacts are provided by H63, H65, D67, H68, H145, D216, and H274. D67 serves as the catalytic Proton acceptor.

The protein belongs to the RNase Z family. In terms of assembly, homodimer. Zn(2+) serves as cofactor.

The catalysed reaction is Endonucleolytic cleavage of RNA, removing extra 3' nucleotides from tRNA precursor, generating 3' termini of tRNAs. A 3'-hydroxy group is left at the tRNA terminus and a 5'-phosphoryl group is left at the trailer molecule.. Its function is as follows. Zinc phosphodiesterase, which displays some tRNA 3'-processing endonuclease activity. Probably involved in tRNA maturation, by removing a 3'-trailer from precursor tRNA. The polypeptide is Ribonuclease Z (Streptococcus pyogenes serotype M1).